The following is a 129-amino-acid chain: Large ribosomal subunit protein uL22 (129 aa).

This sequence belongs to the universal ribosomal protein uL22 family. Part of the 50S ribosomal subunit.

Its function is as follows. This protein binds specifically to 23S rRNA; its binding is stimulated by other ribosomal proteins, e.g. L4, L17, and L20. It is important during the early stages of 50S assembly. It makes multiple contacts with different domains of the 23S rRNA in the assembled 50S subunit and ribosome. Functionally, the globular domain of the protein is located near the polypeptide exit tunnel on the outside of the subunit, while an extended beta-hairpin is found that lines the wall of the exit tunnel in the center of the 70S ribosome. The protein is Large ribosomal subunit protein uL22 of Bartonella quintana (strain Toulouse) (Rochalimaea quintana).